A 163-amino-acid polypeptide reads, in one-letter code: Phosphopantetheine adenylyltransferase (163 aa).

Substrate is bound at residue S9. ATP contacts are provided by residues 9–10 and H17; that span reads SF. K41, T73, and R87 together coordinate substrate. Residues 88–90, E98, and 123–129 each bind ATP; these read GLR and YAYFSSS.

Belongs to the bacterial CoaD family. As to quaternary structure, homohexamer. Mg(2+) serves as cofactor.

It is found in the cytoplasm. It catalyses the reaction (R)-4'-phosphopantetheine + ATP + H(+) = 3'-dephospho-CoA + diphosphate. It participates in cofactor biosynthesis; coenzyme A biosynthesis; CoA from (R)-pantothenate: step 4/5. In terms of biological role, reversibly transfers an adenylyl group from ATP to 4'-phosphopantetheine, yielding dephospho-CoA (dPCoA) and pyrophosphate. The polypeptide is Phosphopantetheine adenylyltransferase (Lactiplantibacillus plantarum (strain ATCC BAA-793 / NCIMB 8826 / WCFS1) (Lactobacillus plantarum)).